Consider the following 394-residue polypeptide: NAD(P)H-quinone oxidoreductase subunit H (394 aa).

Belongs to the complex I 49 kDa subunit family. NDH-1 can be composed of about 15 different subunits; different subcomplexes with different compositions have been identified which probably have different functions.

It is found in the cellular thylakoid membrane. It carries out the reaction a plastoquinone + NADH + (n+1) H(+)(in) = a plastoquinol + NAD(+) + n H(+)(out). The enzyme catalyses a plastoquinone + NADPH + (n+1) H(+)(in) = a plastoquinol + NADP(+) + n H(+)(out). Functionally, NDH-1 shuttles electrons from an unknown electron donor, via FMN and iron-sulfur (Fe-S) centers, to quinones in the respiratory and/or the photosynthetic chain. The immediate electron acceptor for the enzyme in this species is believed to be plastoquinone. Couples the redox reaction to proton translocation, and thus conserves the redox energy in a proton gradient. Cyanobacterial NDH-1 also plays a role in inorganic carbon-concentration. The polypeptide is NAD(P)H-quinone oxidoreductase subunit H (Synechococcus sp. (strain CC9311)).